The primary structure comprises 410 residues: BTB and MATH domain-containing protein 42 (410 aa).

A compositionally biased stretch (polar residues) spans 1 to 19 (MSSRSSWSSTEQINRTISS). The tract at residues 1-29 (MSSRSSWSSTEQINRTISSRADDLPPQPR) is disordered. Residues 45–173 (STKLEWKIEQ…DGTLFLICEV (129 aa)) enclose the MATH domain. The BTB domain occupies 219 to 287 (TDCVIHVGNK…MYTGATESLE (69 aa)). The segment at 389–410 (TSNIPISVSPPPARKRLRRSAK) is disordered. The segment covering 401–410 (ARKRLRRSAK) has biased composition (basic residues).

As to quaternary structure, interacts with cul-3.

Its pathway is protein modification; protein ubiquitination. Probable substrate-specific adapter of an E3 ubiquitin-protein ligase complex which mediates the ubiquitination and subsequent proteasomal degradation of target proteins. The protein is BTB and MATH domain-containing protein 42 (bath-42) of Caenorhabditis elegans.